The sequence spans 160 residues: Transcriptional repressor NrdR (160 aa).

Residues 3–34 (CPYCQYEDTQVKDSRPVEEGAVIRRRRVCPVC) fold into a zinc finger. The ATP-cone domain occupies 49-139 (LLVSKKSGRC…VYRDFRNASD (91 aa)).

It belongs to the NrdR family. The cofactor is Zn(2+).

Its function is as follows. Negatively regulates transcription of bacterial ribonucleotide reductase nrd genes and operons by binding to NrdR-boxes. The protein is Transcriptional repressor NrdR of Bartonella quintana (strain Toulouse) (Rochalimaea quintana).